A 252-amino-acid chain; its full sequence is Type III pantothenate kinase (252 aa).

6–13 (DIGNTSTA) lines the ATP pocket. Residue 104 to 107 (GADR) participates in substrate binding. Asp-106 (proton acceptor) is an active-site residue. Position 128 (Asp-128) interacts with K(+). Thr-131 contributes to the ATP binding site. Thr-183 contributes to the substrate binding site.

Belongs to the type III pantothenate kinase family. In terms of assembly, homodimer. It depends on NH4(+) as a cofactor. K(+) is required as a cofactor.

The protein resides in the cytoplasm. It carries out the reaction (R)-pantothenate + ATP = (R)-4'-phosphopantothenate + ADP + H(+). Its pathway is cofactor biosynthesis; coenzyme A biosynthesis; CoA from (R)-pantothenate: step 1/5. Its function is as follows. Catalyzes the phosphorylation of pantothenate (Pan), the first step in CoA biosynthesis. In Thermus thermophilus (strain ATCC BAA-163 / DSM 7039 / HB27), this protein is Type III pantothenate kinase.